The sequence spans 185 residues: Elongation factor P (185 aa).

This sequence belongs to the elongation factor P family.

The protein localises to the cytoplasm. It participates in protein biosynthesis; polypeptide chain elongation. Involved in peptide bond synthesis. Stimulates efficient translation and peptide-bond synthesis on native or reconstituted 70S ribosomes in vitro. Probably functions indirectly by altering the affinity of the ribosome for aminoacyl-tRNA, thus increasing their reactivity as acceptors for peptidyl transferase. The protein is Elongation factor P of Thermosynechococcus vestitus (strain NIES-2133 / IAM M-273 / BP-1).